A 75-amino-acid chain; its full sequence is Large ribosomal subunit protein bL31 (75 aa).

Positions 16, 18, 37, and 40 each coordinate Zn(2+).

It belongs to the bacterial ribosomal protein bL31 family. Type A subfamily. As to quaternary structure, part of the 50S ribosomal subunit. The cofactor is Zn(2+).

Binds the 23S rRNA. In Legionella pneumophila (strain Paris), this protein is Large ribosomal subunit protein bL31.